The chain runs to 301 residues: Polyamine aminopropyltransferase (301 aa).

In terms of domain architecture, PABS spans 4–240 (WHWLLEWQTP…GLWGFVYGGV (237 aa)). Gln-33 provides a ligand contact to S-methyl-5'-thioadenosine. Spermidine is bound by residues His-64 and Glu-89. S-methyl-5'-thioadenosine contacts are provided by residues Asp-109 and 141–142 (DG). Residue Asp-159 is the Proton acceptor of the active site.

It belongs to the spermidine/spermine synthase family. Homotrimer.

It is found in the cytoplasm. It carries out the reaction S-adenosyl 3-(methylsulfanyl)propylamine + putrescine = S-methyl-5'-thioadenosine + spermidine + H(+). The catalysed reaction is S-adenosyl 3-(methylsulfanyl)propylamine + propane-1,3-diamine = norspermidine + S-methyl-5'-thioadenosine + H(+). It catalyses the reaction norspermidine + S-adenosyl 3-(methylsulfanyl)propylamine = norspermine + S-methyl-5'-thioadenosine + H(+). The enzyme catalyses S-adenosyl 3-(methylsulfanyl)propylamine + spermidine = thermospermine + S-methyl-5'-thioadenosine + H(+). Its pathway is amine and polyamine biosynthesis; spermidine biosynthesis; spermidine from putrescine: step 1/1. Competitively inhibited by 5-methylthioadenosine, 5-methylthiotubercidin, S-adenosyl(5)-3-thiopropylamine and S-adenosyl-3-thio-l,8-diaminooctane. Functionally, involved in the biosynthesis of polyamines which are thought to support the growth of thermophilic microorganisms under high-temperature conditions. It seems that long-chain and branched-chain of polyamines effectively stabilize DNA and RNA, respectively. Catalyzes the irreversible transfer of a propylamine group from the amino donor S-adenosylmethioninamine (decarboxy-AdoMet) to various amine acceptors such as putrescine (1,4-diaminobutane), 1,3-diaminopropane, sym-norspermidine and spermidine. The biosynthesis of caldopentamine from norspermine has been also observed, but with a very low activity. The reaction involves a nucleophilic attack on the C-3 methylene of the propylamine moiety adjacent to the positively charged sulfur of decarboxy-AdoMet. S-adenosylmethioninamine is the only amino donor. The polypeptide is Polyamine aminopropyltransferase (Saccharolobus solfataricus (strain ATCC 35092 / DSM 1617 / JCM 11322 / P2) (Sulfolobus solfataricus)).